The chain runs to 300 residues: Ribosomal protein bS6--L-glutamate ligase (300 aa).

The 184-residue stretch at 104 to 287 (LQLLARQGID…IAGRMIQWIE (184 aa)) folds into the ATP-grasp domain. Residues K141, 178–179 (EY), D187, and 211–213 (RSN) each bind ATP. Positions 248, 260, and 262 each coordinate Mg(2+). Mn(2+) is bound by residues D248, E260, and N262.

The protein belongs to the RimK family. The cofactor is Mg(2+). Mn(2+) is required as a cofactor.

Its function is as follows. An L-glutamate ligase that catalyzes the ATP-dependent post-translational addition of glutamate residues to the C-terminus of ribosomal protein bS6 (RpsF). Is also able to catalyze the synthesis of poly-alpha-glutamate in vitro, via ATP hydrolysis from unprotected glutamate as substrate. The number of glutamate residues added to either RpsF or to poly-alpha-glutamate changes with pH. In Salmonella agona (strain SL483), this protein is Ribosomal protein bS6--L-glutamate ligase.